Consider the following 297-residue polypeptide: Averufin oxidase stcO (297 aa).

The chain crosses the membrane as a helical span at residues 277-297; the sequence is VVVLGVCILLLLGGLLYSIKA.

Belongs to the avfA family.

The protein resides in the membrane. It functions in the pathway mycotoxin biosynthesis; sterigmatocystin biosynthesis. Functionally, averufin oxidase; part of the gene cluster that mediates the biosynthesis of sterigmatocystin (ST), a polyketide-derived furanocoumarin which is part of the most toxic and carcinogenic compounds among the known mycotoxins. The first step in the biosynthesis of sterigmatocystin is the production of hexanoate by the fatty acid synthase (FAS) units stcJ and stcK. The polyketide backbone is assembled by the non-reducing polyketide synthase stcA by condensation of the starter hexanoyl-CoA and 7 malonyl-CoA extender units followed by cyclization and release of norsolorinic acid. Norsolorinic acid is the first stable intermediate in the biosynthesis of sterigmatocystin and is converted into averantin (AVN) by the ketoreductase stcE which reduces the hexanoate ketone to an alcohol. Averantin is then oxidized into 5'-hydroxyaverantin (HAVN) by the cytochrome P450 monooxygenase stcF. 5'-hydroxyaverantin is further converted to 5'-oxyaverantin (OAVN) by the 5'-hydroxyaverantin dehydrogenase stcG. The next step is the conversion of OAVN into averufin (AVF) which is catalyzed by a yet to be identified enzyme. The cytochrome P450 monooxygenase stcB and the flavin-binding monooxygenase stcW are both required for the conversion of averufin to 1-hydroxyversicolorone. The esterase stcI probably catalyzes the formation of versiconal hemiacetal acetate from 1-hydroxyversicolorone. The oxydoreductase stcN then probably catalyzes the biosynthetic step from versiconal to versicolorin B (VERB). The next step is performed by the versicolorin B desaturase stcL to produce versicolorin A (VERA). The ketoreductase stcU and the cytochrome P450 monooxygenase stcS are involved in the conversion of versicolorin A to demethylsterigmatocystin. The Baeyer-Villiger oxidas stcQ and the reductase stcR might be involved in the biosynthetic step from versicolorin A to demethylsterigmatocystin. The final step in the biosynthesis of sterigmatocystin is the methylation of demethylsterigmatocystin catalyzed by the methyltransferase stcP. This chain is Averufin oxidase stcO, found in Emericella nidulans (strain FGSC A4 / ATCC 38163 / CBS 112.46 / NRRL 194 / M139) (Aspergillus nidulans).